Consider the following 292-residue polypeptide: Histamine N-methyltransferase (292 aa).

Residue Glu-28 participates in substrate binding. Gly-60, Glu-89, Gln-94, Ser-120, and Ile-142 together coordinate S-adenosyl-L-methionine. Residue Asn-283 coordinates substrate.

This sequence belongs to the class I-like SAM-binding methyltransferase superfamily. HNMT family. As to quaternary structure, monomer.

The protein localises to the cytoplasm. It carries out the reaction histamine + S-adenosyl-L-methionine = N(tau)-methylhistamine + S-adenosyl-L-homocysteine + H(+). Its function is as follows. Inactivates histamine by N-methylation. Plays an important role in degrading histamine and in regulating the airway response to histamine. The polypeptide is Histamine N-methyltransferase (HNMT) (Pongo abelii (Sumatran orangutan)).